We begin with the raw amino-acid sequence, 571 residues long: Proline--tRNA ligase (571 aa).

Belongs to the class-II aminoacyl-tRNA synthetase family. ProS type 1 subfamily. As to quaternary structure, homodimer.

The protein resides in the cytoplasm. The enzyme catalyses tRNA(Pro) + L-proline + ATP = L-prolyl-tRNA(Pro) + AMP + diphosphate. Functionally, catalyzes the attachment of proline to tRNA(Pro) in a two-step reaction: proline is first activated by ATP to form Pro-AMP and then transferred to the acceptor end of tRNA(Pro). As ProRS can inadvertently accommodate and process non-cognate amino acids such as alanine and cysteine, to avoid such errors it has two additional distinct editing activities against alanine. One activity is designated as 'pretransfer' editing and involves the tRNA(Pro)-independent hydrolysis of activated Ala-AMP. The other activity is designated 'posttransfer' editing and involves deacylation of mischarged Ala-tRNA(Pro). The misacylated Cys-tRNA(Pro) is not edited by ProRS. This chain is Proline--tRNA ligase, found in Ligilactobacillus salivarius (strain UCC118) (Lactobacillus salivarius).